We begin with the raw amino-acid sequence, 288 residues long: Quinate/shikimate dehydrogenase (288 aa).

2 residues coordinate substrate: K71 and D107. NAD(+)-binding positions include 132–135 (AGGA), 155–158 (NRRD), K205, 232–235 (CVYN), and G255.

It belongs to the shikimate dehydrogenase family. In terms of assembly, homodimer.

The enzyme catalyses L-quinate + NAD(+) = 3-dehydroquinate + NADH + H(+). It carries out the reaction L-quinate + NADP(+) = 3-dehydroquinate + NADPH + H(+). It catalyses the reaction shikimate + NADP(+) = 3-dehydroshikimate + NADPH + H(+). The catalysed reaction is shikimate + NAD(+) = 3-dehydroshikimate + NADH + H(+). It functions in the pathway metabolic intermediate biosynthesis; chorismate biosynthesis; chorismate from D-erythrose 4-phosphate and phosphoenolpyruvate: step 4/7. Functionally, the actual biological function of YdiB remains unclear, nor is it known whether 3-dehydroshikimate or quinate represents the natural substrate. Catalyzes the reversible NAD-dependent reduction of both 3-dehydroshikimate (DHSA) and 3-dehydroquinate to yield shikimate (SA) and quinate, respectively. It can use both NAD or NADP for catalysis, however it has higher catalytic efficiency with NAD. The protein is Quinate/shikimate dehydrogenase of Escherichia coli O17:K52:H18 (strain UMN026 / ExPEC).